The chain runs to 144 residues: Large ribosomal subunit protein uL15 (144 aa).

Basic and acidic residues predominate over residues 1–13; the sequence is MKLNELKPAEGSR. The segment at 1–47 is disordered; it reads MKLNELKPAEGSRKVRNRVGRGDSSGNGKTAGRGQKGQKARSKTRLG. Residues 23 to 35 show a composition bias toward gly residues; sequence DSSGNGKTAGRGQ.

The protein belongs to the universal ribosomal protein uL15 family. In terms of assembly, part of the 50S ribosomal subunit.

In terms of biological role, binds to the 23S rRNA. This is Large ribosomal subunit protein uL15 from Levilactobacillus brevis (strain ATCC 367 / BCRC 12310 / CIP 105137 / JCM 1170 / LMG 11437 / NCIMB 947 / NCTC 947) (Lactobacillus brevis).